A 127-amino-acid polypeptide reads, in one-letter code: V-type proton ATPase subunit F (127 aa).

It belongs to the V-ATPase F subunit family. In terms of assembly, V-ATPase is a heteromultimeric enzyme made up of two complexes: the ATP-hydrolytic V1 complex and the proton translocation V0 complex. The V1 complex consists of three catalytic AB heterodimers that form a heterohexamer, three peripheral stalks each consisting of EG heterodimers, one central rotor including subunits D and F, and the regulatory subunits C and H. The proton translocation complex V0 consists of the proton transport subunit a, a ring of proteolipid subunits c9c'', rotary subunit d, subunits e and f, and the accessory subunits VhaAC45 and ATP6AP2.

Its function is as follows. Subunit of the V1 complex of vacuolar(H+)-ATPase (V-ATPase), a multisubunit enzyme composed of a peripheral complex (V1) that hydrolyzes ATP and a membrane integral complex (V0) that translocates protons. V-ATPase is responsible for acidifying and maintaining the pH of intracellular compartments and in some cell types, is targeted to the plasma membrane, where it is responsible for acidifying the extracellular environment. This is V-type proton ATPase subunit F from Aedes aegypti (Yellowfever mosquito).